The primary structure comprises 125 residues: Large ribosomal subunit protein bL20 (125 aa).

It belongs to the bacterial ribosomal protein bL20 family.

Its function is as follows. Binds directly to 23S ribosomal RNA and is necessary for the in vitro assembly process of the 50S ribosomal subunit. It is not involved in the protein synthesizing functions of that subunit. In Thermobifida fusca (strain YX), this protein is Large ribosomal subunit protein bL20.